Consider the following 500-residue polypeptide: Glycerol kinase (500 aa).

T13 serves as a coordination point for ADP. ATP contacts are provided by T13, T14, and S15. Position 13 (T13) interacts with sn-glycerol 3-phosphate. R17 is a binding site for ADP. Residues R83, E84, Y135, and D245 each contribute to the sn-glycerol 3-phosphate site. Glycerol is bound by residues R83, E84, Y135, D245, and Q246. Residues T267 and G310 each contribute to the ADP site. 4 residues coordinate ATP: T267, G310, Q314, and G411. The ADP site is built by G411 and N415.

This sequence belongs to the FGGY kinase family. In terms of assembly, homotetramer and homodimer (in equilibrium).

The catalysed reaction is glycerol + ATP = sn-glycerol 3-phosphate + ADP + H(+). The protein operates within polyol metabolism; glycerol degradation via glycerol kinase pathway; sn-glycerol 3-phosphate from glycerol: step 1/1. With respect to regulation, activated by phosphorylation and inhibited by fructose 1,6-bisphosphate (FBP). Its function is as follows. Key enzyme in the regulation of glycerol uptake and metabolism. Catalyzes the phosphorylation of glycerol to yield sn-glycerol 3-phosphate. This chain is Glycerol kinase, found in Lactobacillus acidophilus (strain ATCC 700396 / NCK56 / N2 / NCFM).